The sequence spans 407 residues: Putative serine/threonine-protein kinase C01C4.3 (407 aa).

A compositionally biased stretch (polar residues) spans 33 to 57; sequence NQLQNHPPRNATQSPQRQPRTSESS. Residues 33–68 are disordered; it reads NQLQNHPPRNATQSPQRQPRTSESSMDFPRSALRRN. One can recognise a Protein kinase domain in the interval 126–397; that stretch reads YTVNKQLGTG…RKCLAKEKLL (272 aa). Residues 132–140 and Lys-155 each bind ATP; that span reads LGTGRFGFI. Asn-251 serves as the catalytic Proton acceptor.

It belongs to the protein kinase superfamily. Ser/Thr protein kinase family.

The enzyme catalyses L-seryl-[protein] + ATP = O-phospho-L-seryl-[protein] + ADP + H(+). It carries out the reaction L-threonyl-[protein] + ATP = O-phospho-L-threonyl-[protein] + ADP + H(+). The protein is Putative serine/threonine-protein kinase C01C4.3 of Caenorhabditis elegans.